We begin with the raw amino-acid sequence, 126 residues long: Large ribosomal subunit protein bL20 (126 aa).

Residues 1 to 15 (MARVKRAVNAQKKRR) show a composition bias toward basic residues. The interval 1 to 20 (MARVKRAVNAQKKRRTTLER) is disordered.

The protein belongs to the bacterial ribosomal protein bL20 family.

Binds directly to 23S ribosomal RNA and is necessary for the in vitro assembly process of the 50S ribosomal subunit. It is not involved in the protein synthesizing functions of that subunit. This Beutenbergia cavernae (strain ATCC BAA-8 / DSM 12333 / CCUG 43141 / JCM 11478 / NBRC 16432 / NCIMB 13614 / HKI 0122) protein is Large ribosomal subunit protein bL20.